The following is a 297-amino-acid chain: Phosphatidylinositol N-acetylglucosaminyltransferase subunit C (297 aa).

4 helical membrane passes run 67-87 (VFVVIWWYMDEGLLAPQWLFG), 88-108 (TGLASSLIGYVLFDFIDGGEG), 153-173 (AVFMLLGHLIFFDYGANAAIV), and 239-259 (ALGGLLSISAVGAILFALLLI).

Belongs to the PIGC family. Component of the glycosylphosphatidylinositol-N-acetylglucosaminyltransferase (GPI-GnT) complex composed at least by PIGA, PIGC, PIGH, PIGP, PIGQ, PIGY and DPM2. Interacts with PIGQ. Interacts with the heterodimer PIGA:PIGH.

It is found in the endoplasmic reticulum membrane. It participates in glycolipid biosynthesis; glycosylphosphatidylinositol-anchor biosynthesis. Part of the glycosylphosphatidylinositol-N-acetylglucosaminyltransferase (GPI-GnT) complex that catalyzes the transfer of N-acetylglucosamine from UDP-N-acetylglucosamine to phosphatidylinositol and participates in the first step of GPI biosynthesis. The protein is Phosphatidylinositol N-acetylglucosaminyltransferase subunit C of Bos taurus (Bovine).